Reading from the N-terminus, the 194-residue chain is MRTATITRTTKETTITISLNLDQQSGIQIATGIGFFDHMLDAFAKHGRFGLTVDAQGDLDVDPHHTIEDTGIVLGECFKQALGDKAGIERFGSAFVPMDESLARAVVDLSGRAYLVFDAELTNQRLGGFDTEVTEDFFQAVAFAGEFNLHASVLYGRNTHHKIEALFKALGRSLRAAVAINPEVQGIPSTKGVI.

Belongs to the imidazoleglycerol-phosphate dehydratase family.

It localises to the cytoplasm. It catalyses the reaction D-erythro-1-(imidazol-4-yl)glycerol 3-phosphate = 3-(imidazol-4-yl)-2-oxopropyl phosphate + H2O. It functions in the pathway amino-acid biosynthesis; L-histidine biosynthesis; L-histidine from 5-phospho-alpha-D-ribose 1-diphosphate: step 6/9. The sequence is that of Imidazoleglycerol-phosphate dehydratase from Lacticaseibacillus casei (strain BL23) (Lactobacillus casei).